Consider the following 296-residue polypeptide: Cytidine deaminase (296 aa).

CMP/dCMP-type deaminase domains lie at 47–167 and 186–296; these read DSHE…FGPA and ESDD…VDPV. 88-90 contributes to the substrate binding site; sequence NLE. His-101 is a Zn(2+) binding site. Glu-103 (proton donor) is an active-site residue. 2 residues coordinate Zn(2+): Cys-128 and Cys-131.

Belongs to the cytidine and deoxycytidylate deaminase family. Homodimer. The cofactor is Zn(2+).

The catalysed reaction is cytidine + H2O + H(+) = uridine + NH4(+). The enzyme catalyses 2'-deoxycytidine + H2O + H(+) = 2'-deoxyuridine + NH4(+). Its function is as follows. This enzyme scavenges exogenous and endogenous cytidine and 2'-deoxycytidine for UMP synthesis. This Shewanella amazonensis (strain ATCC BAA-1098 / SB2B) protein is Cytidine deaminase.